Here is a 181-residue protein sequence, read N- to C-terminus: Protein GrpE (181 aa).

Residues 1–13 (MENTQENPATQSA) show a composition bias toward polar residues. Positions 1–34 (MENTQENPATQSAEDIGSAKQAAQGAAPAAEAAD) are disordered. A compositionally biased stretch (low complexity) spans 19–34 (AKQAAQGAAPAAEAAD).

It belongs to the GrpE family. As to quaternary structure, homodimer.

It localises to the cytoplasm. Participates actively in the response to hyperosmotic and heat shock by preventing the aggregation of stress-denatured proteins, in association with DnaK and GrpE. It is the nucleotide exchange factor for DnaK and may function as a thermosensor. Unfolded proteins bind initially to DnaJ; upon interaction with the DnaJ-bound protein, DnaK hydrolyzes its bound ATP, resulting in the formation of a stable complex. GrpE releases ADP from DnaK; ATP binding to DnaK triggers the release of the substrate protein, thus completing the reaction cycle. Several rounds of ATP-dependent interactions between DnaJ, DnaK and GrpE are required for fully efficient folding. The sequence is that of Protein GrpE from Burkholderia vietnamiensis (strain G4 / LMG 22486) (Burkholderia cepacia (strain R1808)).